Here is a 302-residue protein sequence, read N- to C-terminus: Quinolinate synthase (302 aa).

The iminosuccinate site is built by His-24 and Ser-41. [4Fe-4S] cluster is bound at residue Cys-86. Residues 112 to 114 and Ser-129 contribute to the iminosuccinate site; that span reads YVN. Cys-171 is a binding site for [4Fe-4S] cluster. Residues 197-199 and Thr-214 contribute to the iminosuccinate site; that span reads HPE. Residue Cys-259 participates in [4Fe-4S] cluster binding.

Belongs to the quinolinate synthase family. Type 2 subfamily. Requires [4Fe-4S] cluster as cofactor.

It is found in the cytoplasm. It catalyses the reaction iminosuccinate + dihydroxyacetone phosphate = quinolinate + phosphate + 2 H2O + H(+). It functions in the pathway cofactor biosynthesis; NAD(+) biosynthesis; quinolinate from iminoaspartate: step 1/1. Its function is as follows. Catalyzes the condensation of iminoaspartate with dihydroxyacetone phosphate to form quinolinate. The protein is Quinolinate synthase of Dehalococcoides mccartyi (strain CBDB1).